A 977-amino-acid chain; its full sequence is P3N-PIPO polyprotein (977 aa).

Residues 132-274 (TCSSSGLDNL…QSITLRATHF (143 aa)) form the Peptidase S30 domain. Active-site for P1 proteinase activity residues include His-183, Asp-192, and Ser-225. An Involved in interaction with stylet and aphid transmission motif is present at residues 325–328 (KITC). The short motif at 583 to 585 (PTK) is the Involved in virions binding and aphid transmission element. In terms of domain architecture, Peptidase C6 spans 609–731 (MYIAKEGYCY…ESPMAQYKVG (123 aa)). Active-site for helper component proteinase activity residues include Cys-617 and His-690.

This sequence belongs to the potyviridae P3N-PIPO polyprotein family. As to quaternary structure, interacts (via PIPO domain) with host PCaP1 protein; this interaction may help to anchor the movement complex to the plasma membrane from which the complex could move to the plasmodesmata. In terms of processing, potyviral RNA is expressed as two polyproteins which undergo post-translational proteolytic processing. Genome polyprotein is processed by NIa-pro, P1 and HC-pro proteinases resulting in the production of at least ten individual proteins. P3N-PIPO is cleaved by P1 and HC-pro proteinases resulting in the production of three individual proteins. The P1 proteinase and the HC-pro cleave only their respective C-termini autocatalytically.

It localises to the host cell junction. The protein resides in the host plasmodesma. The enzyme catalyses Hydrolyzes a Gly-|-Gly bond at its own C-terminus, commonly in the sequence -Tyr-Xaa-Val-Gly-|-Gly, in the processing of the potyviral polyprotein.. Functionally, required for aphid transmission and also has proteolytic activity. Only cleaves a Gly-Gly dipeptide at its own C-terminus. Interacts with virions and aphid stylets. Acts as a suppressor of RNA-mediated gene silencing, also known as post-transcriptional gene silencing (PTGS), a mechanism of plant viral defense that limits the accumulation of viral RNAs. May have RNA-binding activity. In terms of biological role, allows efficient cell to cell propagation, by bypassing the host cell wall barrier. Transports viral genome to neighboring plant cells directly through plasmosdesmata, without any budding. This chain is P3N-PIPO polyprotein, found in Nicotiana tabacum (Common tobacco).